The sequence spans 246 residues: Proteasome subunit alpha type-6-A (246 aa).

The protein belongs to the peptidase T1A family. In terms of assembly, component of the 20S core complex of the 26S proteasome. The 26S proteasome is composed of a core protease (CP), known as the 20S proteasome, capped at one or both ends by the 19S regulatory particle (RP/PA700). The 20S proteasome core is composed of 28 subunits that are arranged in four stacked rings, resulting in a barrel-shaped structure. The two end rings are each formed by seven alpha subunits, and the two central rings are each formed by seven beta subunits. The catalytic chamber with the active sites is on the inside of the barrel. In terms of tissue distribution, ubiquitous low levels, higher expression in siliques and flowers.

It localises to the cytoplasm. The protein resides in the nucleus. Its function is as follows. The proteasome is a multicatalytic proteinase complex which is characterized by its ability to cleave peptides with Arg, Phe, Tyr, Leu, and Glu adjacent to the leaving group at neutral or slightly basic pH. The proteasome has an ATP-dependent proteolytic activity. The sequence is that of Proteasome subunit alpha type-6-A (PAA1) from Arabidopsis thaliana (Mouse-ear cress).